A 273-amino-acid chain; its full sequence is Probable membrane transporter protein YunE (273 aa).

8 consecutive transmembrane segments (helical) span residues 3–23, 50–70, 81–101, 105–125, 157–177, 185–205, 222–242, and 251–271; these read FVIL…IGLG, AIGT…LAYI, LIFF…SKLF, SFSV…MLKA, VGIA…IGGG, MLLF…IIFL, WLYA…GAAI, and IVMI…YEGI.

The protein belongs to the 4-toluene sulfonate uptake permease (TSUP) (TC 2.A.102) family.

The protein resides in the cell membrane. This is Probable membrane transporter protein YunE (yunE) from Bacillus subtilis (strain 168).